Here is a 243-residue protein sequence, read N- to C-terminus: MTTNPKPAYQRILLKLSGEALQGEEGFGIDPAVLDRMAQEVKELVELGVQVGVVIGGGNLFRGAGLAEAGMNRVVGDHMGMLATVMNGLAMRDALHRAYVNARVMSAIPLKGVCDDYNWADAIRELRQGRVVIFSAGTGNPFFTTDSAACLRGIEIEADVVLKATKVDGVFTADPVANPDAELYDKLSYTEVLDKELKVMDLAAFTLARDHKMPIRVFNMNKPGALRRVVMGEAEGTLINADA.

15–18 contacts ATP; that stretch reads KLSG. The tract at residues 23–28 is involved in allosteric activation by GTP; sequence GEEGFG. UMP is bound at residue Gly57. ATP contacts are provided by Gly58 and Arg62. Residues Asp77 and 138-145 each bind UMP; that span reads TGNPFFTT. 3 residues coordinate ATP: Thr165, Phe171, and Asp174.

Belongs to the UMP kinase family. In terms of assembly, homohexamer.

Its subcellular location is the cytoplasm. The enzyme catalyses UMP + ATP = UDP + ADP. The protein operates within pyrimidine metabolism; CTP biosynthesis via de novo pathway; UDP from UMP (UMPK route): step 1/1. Allosterically activated by GTP. Inhibited by UTP. Its function is as follows. Catalyzes the reversible phosphorylation of UMP to UDP. The protein is Uridylate kinase of Vibrio campbellii (strain ATCC BAA-1116).